The following is a 260-amino-acid chain: uncharacterized protein (260 aa).

The stretch at 214–252 (IHQFIETEIERIMEAAKELKAEKKDMTSELNRLLLNTVE) forms a coiled coil.

This is an uncharacterized protein from Bacillus subtilis (strain 168).